We begin with the raw amino-acid sequence, 1488 residues long: MSIPENAIAVVGMAGRFPGAKDVSAFWSNLRRGKESIVTLSEQELRDAGVSDKTLADPAYVRRAPLLDGIDEFDAGFFGFPPLAAQVLDPQHRLFLQCAWHALEDAGADPARFDGSIGVYGTSSPSGYLLHNLLSHRDPNAVLAEGLNFDQFSLFLQNDKDFLATRISHAFNLRGPSIAVQTACSSSLVAVHLACLSLLSGECDMALAGGSSLCIPHRVGYFTSPGSMVSAVGHCRPFDVRADGTVFGSGVGLVVLKPLAAAIDAGDRIHAVIRGSAINNDGSAKMGYAAPNPAAQADVIAEAHAVSGIDSSTVSYVECHGTGTPLGDPIEIQGLRAAFEVSQTSRSAPCVLGSVKSNIGHLEVAAGIAGLIKTILCLKNKALPATLHYTSPNPELRLDQSPFVVQSKYGPWECDGVRRAGVSSFGVGGTNAHVVLEEAPAEASEVSAHAEPAGPQVILLSAQTAAALGESRTALAAALETQDGPRLSDVAYTLARRRKHNVTMAAVVHDREHAATVLRAAEHDNVFVGEAAHDGEHGDRADAAPTSDRVVFLFPGQGAQHVGMAKGLYDTEPVFAQHFDTCAAGFRDETGIDLHAEVFDGTATDLERIDRSQPALFTVEYALAKLVDTFGVRAGAYIGYSTGEYIAATLAGVFDLQTAIKTVSLRARLMHESPPGAMVAVALGPDDVTQYLPPEVELSAVNDPGNCVVAGPKDQIRALRQRLTEAGIPVRRVRATHAFHTSAMDPMLGQFQEFLSRQQLRPPRTPLLSNLTGSWMSDQQVVDPASWTRQISSPIRFADELDVVLAAPSRILVEVGPGGSLTGSAMRHPKWSTTHRTVRLMRHPLQDVDDRDTFLRALGELWSAGVEVDWTPRRPAVPHLVSLPGYPFARQRHWVEPNHTVWAQAPGANNGSPAGTADGSTAATVDAARNGESQTEVTLQRIWSQCLGVSSVDRNANFFDLGGDSLMAISIAMAAANEGLTITPQDLYEYPTLASLTAAVDASFASSGLAKPPEAQANPAVPPNVTYFLDRGLRDTGRCRVPLILRLDPKIGLPDIRAVLTAVVNHHDALRLHLVGNDGIWEQHIAAPAEFTGLSNRSVPNGVAAGSPEERAAVLGILAELLEDQTDPNAPLAAVHIAAAHGGPHYLCLAIHAMVTDDSSRQILATDIVTAFGQRLAGEEITLEPVSTGWREWSLRCAALATHPAALDTRSYWIENSTKATLWLADALPNAHTAHPPRADELTKLSSTLSVEQTSELDDGRRRFRRSIQTILLAALGRTIAQTVGEGVVAVELEGEGRSVLRPDVDLRRTVGWFTTYYPVPLACATGLGALAQLDAVHNTLKSVPHYGIGYGLLRYVYAPTGRVLGAQRTPDIHFRYAGVIPELPSGDAPVQFDSDMTLPVREPIPGMGHAIELRVYRFGGSLHLDWWYDTRRIPAATAEALERTFPLALSALIQEAIAAEHTEHDDSEIVGEPEAGALVDLSSMDAG.

The region spanning 5 to 438 is the Ketosynthase family 3 (KS3) domain; sequence ENAIAVVGMA…GTNAHVVLEE (434 aa). Active-site for beta-ketoacyl synthase activity residues include cysteine 184, histidine 320, and histidine 361. The tract at residues 551-868 is acyltransferase; that stretch reads VFLFPGQGAQ…GELWSAGVEV (318 aa). Serine 641 acts as the For malonyltransferase activity in catalysis. The Carrier domain occupies 930–1004; sequence NGESQTEVTL…SLTAAVDASF (75 aa). The residue at position 965 (serine 965) is an O-(pantetheine 4'-phosphoryl)serine. Residue 1286-1331 participates in NADP(+) binding; the sequence is EGVVAVELEGEGRSVLRPDVDLRRTVGWFTTYYPVPLACATGLGAL.

NADP(+) is required as a cofactor. It depends on pantetheine 4'-phosphate as a cofactor.

It carries out the reaction icosanoyl-[(phenol)carboxyphthiodiolenone synthase] + 2 (S)-methylmalonyl-CoA + 3 malonyl-CoA + 5 NADPH + 10 H(+) = C32-carboxyphthiodiolenone-[(phenol)carboxyphthiodiolenone synthase] + 5 CO2 + 5 NADP(+) + 5 CoA + 2 H2O. The enzyme catalyses docosanoyl-[(phenol)carboxyphthiodiolenone synthase] + 2 (S)-methylmalonyl-CoA + 3 malonyl-CoA + 5 NADPH + 10 H(+) = C34-carboxyphthiodiolenone-[(phenol)carboxyphthiodiolenone synthase] + 5 CO2 + 5 NADP(+) + 5 CoA + 2 H2O. It catalyses the reaction 17-(4-hydroxyphenyl)heptadecanoyl-[(phenol)carboxyphthiodiolenone synthase] + 2 (S)-methylmalonyl-CoA + 3 malonyl-CoA + 5 NADPH + 10 H(+) = C35-(phenol)carboxyphthiodiolenone-[(phenol)carboxyphthiodiolenone synthase] + 5 CO2 + 5 NADP(+) + 5 CoA + 2 H2O. The catalysed reaction is 19-(4-hydroxyphenyl)nonadecanoyl-[(phenol)carboxyphthiodiolenone synthase] + 2 (S)-methylmalonyl-CoA + 3 malonyl-CoA + 5 NADPH + 10 H(+) = C37-(phenol)carboxyphthiodiolenone-[(phenol)carboxyphthiodiolenone synthase] + 5 CO2 + 5 NADP(+) + 5 CoA + 2 H2O. The protein operates within lipid metabolism; fatty acid biosynthesis. Functionally, part of the PpsABCDE complex involved in the biosynthesis of the lipid core common to phthiocerols and phenolphthiocerols by successive additions of malonyl-CoA or methylmalonyl-CoA extender units. PpsA can accept as substrate the activated forms of either icosanoyl (C20), docosanoyl (C22) or lignoceroyl (C24) groups from FadD26, or a (4-hydroxyphenyl)-C17 or (4-hydroxyphenyl)-C19 fatty acyl from FadD29. PpsA initiates the biosynthesis and extends its substrate using a malonyl-CoA extender unit. The PpsB and PpsC proteins add the second and third malonyl-CoA extender units. PpsD adds an (R)-methylmalonyl unit and PpsE adds a second (R)-methylmalonyl unit. The incorporation of the methylmalonyl units results in formation of two branched methyl groups in the elongated product. This chain is Phenolphthiocerol/phthiocerol polyketide synthase subunit E (ppsE), found in Mycobacterium tuberculosis (strain CDC 1551 / Oshkosh).